A 204-amino-acid polypeptide reads, in one-letter code: MFAFLRGELVTASREEAVVEVSGIGYRLHISSGTSSRLPVPGSPVFLYTHYHVREDLQQLFGFLDEEELQLFRLLLSISGVGPKLAIAVLSGLSVGEIQEAIVSNRPETLFGISGVGRKTAARIILELRDKILKIQPTSSAKAGAPSAVLSATQLIDDAVAALTTLGFPKASAQKAVSKVLETTPGLSVEELVRTSLAAMHNNL.

The domain I stretch occupies residues 1-64 (MFAFLRGELV…EDLQQLFGFL (64 aa)). The interval 65–143 (DEEELQLFRL…KIQPTSSAKA (79 aa)) is domain II. Residues 144–151 (GAPSAVLS) form a flexible linker region. Positions 151-204 (SATQLIDDAVAALTTLGFPKASAQKAVSKVLETTPGLSVEELVRTSLAAMHNNL) are domain III.

The protein belongs to the RuvA family. Homotetramer. Forms an RuvA(8)-RuvB(12)-Holliday junction (HJ) complex. HJ DNA is sandwiched between 2 RuvA tetramers; dsDNA enters through RuvA and exits via RuvB. An RuvB hexamer assembles on each DNA strand where it exits the tetramer. Each RuvB hexamer is contacted by two RuvA subunits (via domain III) on 2 adjacent RuvB subunits; this complex drives branch migration. In the full resolvosome a probable DNA-RuvA(4)-RuvB(12)-RuvC(2) complex forms which resolves the HJ.

Its subcellular location is the cytoplasm. In terms of biological role, the RuvA-RuvB-RuvC complex processes Holliday junction (HJ) DNA during genetic recombination and DNA repair, while the RuvA-RuvB complex plays an important role in the rescue of blocked DNA replication forks via replication fork reversal (RFR). RuvA specifically binds to HJ cruciform DNA, conferring on it an open structure. The RuvB hexamer acts as an ATP-dependent pump, pulling dsDNA into and through the RuvAB complex. HJ branch migration allows RuvC to scan DNA until it finds its consensus sequence, where it cleaves and resolves the cruciform DNA. The protein is Holliday junction branch migration complex subunit RuvA of Chlorobaculum parvum (strain DSM 263 / NCIMB 8327) (Chlorobium vibrioforme subsp. thiosulfatophilum).